Reading from the N-terminus, the 369-residue chain is 4-hydroxy-3-methylbut-2-en-1-yl diphosphate synthase (flavodoxin) (369 aa).

Positions 270, 273, 305, and 312 each coordinate [4Fe-4S] cluster.

It belongs to the IspG family. [4Fe-4S] cluster is required as a cofactor.

It catalyses the reaction (2E)-4-hydroxy-3-methylbut-2-enyl diphosphate + oxidized [flavodoxin] + H2O + 2 H(+) = 2-C-methyl-D-erythritol 2,4-cyclic diphosphate + reduced [flavodoxin]. It functions in the pathway isoprenoid biosynthesis; isopentenyl diphosphate biosynthesis via DXP pathway; isopentenyl diphosphate from 1-deoxy-D-xylulose 5-phosphate: step 5/6. In terms of biological role, converts 2C-methyl-D-erythritol 2,4-cyclodiphosphate (ME-2,4cPP) into 1-hydroxy-2-methyl-2-(E)-butenyl 4-diphosphate. The sequence is that of 4-hydroxy-3-methylbut-2-en-1-yl diphosphate synthase (flavodoxin) from Pseudomonas fluorescens (strain ATCC BAA-477 / NRRL B-23932 / Pf-5).